The sequence spans 443 residues: Na(+)-translocating NADH-quinone reductase subunit A (443 aa).

This sequence belongs to the NqrA family. As to quaternary structure, composed of six subunits; NqrA, NqrB, NqrC, NqrD, NqrE and NqrF.

It carries out the reaction a ubiquinone + n Na(+)(in) + NADH + H(+) = a ubiquinol + n Na(+)(out) + NAD(+). NQR complex catalyzes the reduction of ubiquinone-1 to ubiquinol by two successive reactions, coupled with the transport of Na(+) ions from the cytoplasm to the periplasm. NqrA to NqrE are probably involved in the second step, the conversion of ubisemiquinone to ubiquinol. The polypeptide is Na(+)-translocating NADH-quinone reductase subunit A (Actinobacillus succinogenes (strain ATCC 55618 / DSM 22257 / CCUG 43843 / 130Z)).